A 463-amino-acid chain; its full sequence is POU domain, class 2, transcription factor 2 (463 aa).

Disordered stretches follow at residues 1 to 87 (MVHS…QPHL), 159 to 182 (QPRA…EEPS), 259 to 282 (SSLP…GRRR), 341 to 376 (PCSA…LSQA), and 393 to 463 (TLHP…PYQP). Over residues 12–37 (RMSKPLEAEKQSLDSPSEHTDTERNG) the composition is skewed to basic and acidic residues. Residues 41 to 60 (NHQNPQNKASPFSVSPTGPS) are compositionally biased toward polar residues. Over residues 75–85 (AAPPPPQPAQP) the composition is skewed to pro residues. Positions 179–253 (EEPSDLEELE…LLEKWLNDAE (75 aa)) constitute a POU-specific domain. Positions 259–272 (SSLPSPNQLSSPSL) are enriched in low complexity. Positions 281–340 (RRKKRTSIETNVRFALEKSFLANQKPTSEEILLIAEQLHMEKEVIRVWFCNRRQKEKRIN) form a DNA-binding region, homeobox. The interval 373-394 (LSQASSSLSTTVTTLSSAVGTL) is leucine-zipper. Residues 400–409 (AGGGGGGGGA) show a composition bias toward gly residues.

The protein belongs to the POU transcription factor family. Class-2 subfamily. As to quaternary structure, interacts with NR3C1, AR and PGR. Interacts with POU2AF1; the interaction increases POU2F2 transactivation activity. In terms of tissue distribution, highest in B cells, but also present in brain (neuronal and glial cells), intestine, kidney, and testes. Expressed at higher levels in B-cells than in neuronal cells. As to expression, expressed in neuronal cell lines and brain, but not dorsal root ganglia. In terms of tissue distribution, expressed at lower levels in neuronal cells than in B cells. Expressed in neuronal cell lines, and at lower levels in neuroblastoma and dorsal root ganglia. As to expression, widely expressed in the developing nervous system but expression is confined to very specific regions in the adult brain, it is expressed at a lower level in B cells. In terms of tissue distribution, either absent in, or expressed at very low levels in neuronal cells and brain. Expressed in all tissues tested: mammary gland, liver, spleen, lung, kidney intestine, uterus and ovary of a virgin mouse. Levels of isoform OCT2.7 are highest in spleen and lung. In mammary gland, expression is localized to the alveolus epithelial cells.

The protein resides in the cytoplasm. Its subcellular location is the nucleus. Its activity is regulated as follows. Transactivation activity is enhanced by transcriptional coactivator POU2AF1. Functionally, transcription factor that specifically binds to the octamer motif (5'-ATTTGCAT-3'). Regulates IL6 expression in B cells with POU2AF1. Regulates transcription in a number of tissues in addition to activating immunoglobulin gene expression. Modulates transcription transactivation by NR3C1, AR and PGR. In terms of biological role, activates octamer-containing promoters. Its function is as follows. Represses some promoters and activate others. Represses some promoters and activate others. Activates the U2 small nuclear RNA (snRNA) promoter. Functionally, unable to bind to the octamer motif, but can still activate the beta-casein gene promoter at low levels. The sequence is that of POU domain, class 2, transcription factor 2 from Mus musculus (Mouse).